The chain runs to 81 residues: ATP synthase subunit c (81 aa).

2 helical membrane passes run 14-34 (YLGA…IGTV) and 60-80 (LAFA…LLFV).

The protein belongs to the ATPase C chain family. As to quaternary structure, F-type ATPases have 2 components, F(1) - the catalytic core - and F(0) - the membrane proton channel. F(1) has five subunits: alpha(3), beta(3), gamma(1), delta(1), epsilon(1). F(0) has three main subunits: a(1), b(2) and c(10-14). The alpha and beta chains form an alternating ring which encloses part of the gamma chain. F(1) is attached to F(0) by a central stalk formed by the gamma and epsilon chains, while a peripheral stalk is formed by the delta and b chains.

It is found in the cell membrane. In terms of biological role, f(1)F(0) ATP synthase produces ATP from ADP in the presence of a proton or sodium gradient. F-type ATPases consist of two structural domains, F(1) containing the extramembraneous catalytic core and F(0) containing the membrane proton channel, linked together by a central stalk and a peripheral stalk. During catalysis, ATP synthesis in the catalytic domain of F(1) is coupled via a rotary mechanism of the central stalk subunits to proton translocation. Key component of the F(0) channel; it plays a direct role in translocation across the membrane. A homomeric c-ring of between 10-14 subunits forms the central stalk rotor element with the F(1) delta and epsilon subunits. The polypeptide is ATP synthase subunit c (Clostridium acetobutylicum (strain ATCC 824 / DSM 792 / JCM 1419 / IAM 19013 / LMG 5710 / NBRC 13948 / NRRL B-527 / VKM B-1787 / 2291 / W)).